The following is a 717-amino-acid chain: Glutamine--fructose-6-phosphate aminotransferase [isomerizing] (717 aa).

The active-site For GATase activity is the cysteine 2. The 317-residue stretch at 2-318 (CGIFGYCNYL…DDDLAHIYDG (317 aa)) folds into the Glutamine amidotransferase type-2 domain. A Phosphoserine modification is found at serine 253. The residue at position 334 (threonine 334) is a Phosphothreonine. At serine 336 the chain carries Phosphoserine. 2 SIS domains span residues 390-529 (WLPV…DRVS) and 562-707 (CATE…VDFP).

It carries out the reaction D-fructose 6-phosphate + L-glutamine = D-glucosamine 6-phosphate + L-glutamate. It participates in nucleotide-sugar biosynthesis; UDP-N-acetyl-alpha-D-glucosamine biosynthesis; alpha-D-glucosamine 6-phosphate from D-fructose 6-phosphate: step 1/1. In terms of biological role, involved in amino sugar synthesis (formation of chitin, supplies the amino sugars of asparagine-linked oligosaccharides of glycoproteins). The protein is Glutamine--fructose-6-phosphate aminotransferase [isomerizing] (GFA1) of Saccharomyces cerevisiae (strain ATCC 204508 / S288c) (Baker's yeast).